A 129-amino-acid polypeptide reads, in one-letter code: Glycine cleavage system H protein (129 aa).

Residues 24–106 form the Lipoyl-binding domain; that stretch reads IATIGITEFA…YGEGWFLKVR (83 aa). An N6-lipoyllysine modification is found at Lys65.

It belongs to the GcvH family. In terms of assembly, the glycine cleavage system is composed of four proteins: P, T, L and H. (R)-lipoate serves as cofactor.

Functionally, the glycine cleavage system catalyzes the degradation of glycine. The H protein shuttles the methylamine group of glycine from the P protein to the T protein. The chain is Glycine cleavage system H protein from Nostoc punctiforme (strain ATCC 29133 / PCC 73102).